Reading from the N-terminus, the 66-residue chain is Large ribosomal subunit protein bL35 (66 aa).

Basic residues-rich tracts occupy residues 1 to 15 and 28 to 45; these read MPKL…KRFK and TKRH…RTRR. Positions 1–49 are disordered; sequence MPKLKTKSSAKKRFKVTASGRVMSAQSTKRHGMTKRSKRSLRTRRGIAQ.

This sequence belongs to the bacterial ribosomal protein bL35 family.

The chain is Large ribosomal subunit protein bL35 from Anaplasma marginale (strain Florida).